Consider the following 29-residue polypeptide: Cytochrome b6-f complex subunit 8 (29 aa).

A helical transmembrane segment spans residues 3 to 23 (MVSLAWAALMVVFTFSLSLVV).

This sequence belongs to the PetN family. The 4 large subunits of the cytochrome b6-f complex are cytochrome b6, subunit IV (17 kDa polypeptide, PetD), cytochrome f and the Rieske protein, while the 4 small subunits are PetG, PetL, PetM and PetN. The complex functions as a dimer.

Its subcellular location is the plastid. The protein localises to the chloroplast thylakoid membrane. Its function is as follows. Component of the cytochrome b6-f complex, which mediates electron transfer between photosystem II (PSII) and photosystem I (PSI), cyclic electron flow around PSI, and state transitions. This Cucumis sativus (Cucumber) protein is Cytochrome b6-f complex subunit 8.